The chain runs to 384 residues: uncharacterized protein (384 aa).

Residues 327–339 (KKEKKEKKEKKPK) are compositionally biased toward basic residues. The tract at residues 327 to 358 (KKEKKEKKEKKPKKAVEEEPKQYLTPEFVNDD) is disordered.

This is an uncharacterized protein from Magallana gigas (Pacific oyster).